The primary structure comprises 304 residues: UDP-N-acetylenolpyruvoylglucosamine reductase (304 aa).

Residues 34–198 (IGGKADFLVW…LEVVFALQPG (165 aa)) form the FAD-binding PCMH-type domain. Arg-177 is a catalytic residue. The Proton donor role is filled by Ser-227. Residue Glu-297 is part of the active site.

Belongs to the MurB family. Requires FAD as cofactor.

The protein resides in the cytoplasm. It carries out the reaction UDP-N-acetyl-alpha-D-muramate + NADP(+) = UDP-N-acetyl-3-O-(1-carboxyvinyl)-alpha-D-glucosamine + NADPH + H(+). The protein operates within cell wall biogenesis; peptidoglycan biosynthesis. Cell wall formation. This Geobacillus thermodenitrificans (strain NG80-2) protein is UDP-N-acetylenolpyruvoylglucosamine reductase.